The primary structure comprises 322 residues: Malate dehydrogenase (322 aa).

NAD(+) contacts are provided by residues glycine 10–glycine 15 and aspartate 34. Positions 83 and 89 each coordinate substrate. Residues asparagine 96 and isoleucine 119–asparagine 121 each bind NAD(+). Residues asparagine 121 and arginine 152 each contribute to the substrate site. Histidine 176 (proton acceptor) is an active-site residue.

It belongs to the LDH/MDH superfamily. MDH type 3 family.

The catalysed reaction is (S)-malate + NAD(+) = oxaloacetate + NADH + H(+). In terms of biological role, catalyzes the reversible oxidation of malate to oxaloacetate. This chain is Malate dehydrogenase, found in Nitrobacter hamburgensis (strain DSM 10229 / NCIMB 13809 / X14).